Here is an 868-residue protein sequence, read N- to C-terminus: Leucine--tRNA ligase (868 aa).

The 'HIGH' region motif lies at 42–52 (PYPSGKLHMGH). The 'KMSKS' region motif lies at 627-631 (KMSKS). K630 contributes to the ATP binding site.

The protein belongs to the class-I aminoacyl-tRNA synthetase family.

Its subcellular location is the cytoplasm. It carries out the reaction tRNA(Leu) + L-leucine + ATP = L-leucyl-tRNA(Leu) + AMP + diphosphate. In Pseudomonas putida (strain W619), this protein is Leucine--tRNA ligase.